Here is a 464-residue protein sequence, read N- to C-terminus: Cell division protein FtsA (464 aa).

Residues 392 to 464 are disordered; it reads EVIESDKDSE…FKKLMKSLFE (73 aa). Positions 416–455 are enriched in basic and acidic residues; it reads KKENDEVAPEAPREESYEDRENHLEDEQQTEGKAKEESKF.

The protein belongs to the FtsA/MreB family. As to quaternary structure, self-interacts. Interacts with FtsZ.

The protein resides in the cell membrane. In terms of biological role, cell division protein that is involved in the assembly of the Z ring. May serve as a membrane anchor for the Z ring. The sequence is that of Cell division protein FtsA from Staphylococcus epidermidis (strain ATCC 35984 / DSM 28319 / BCRC 17069 / CCUG 31568 / BM 3577 / RP62A).